Here is a 223-residue protein sequence, read N- to C-terminus: Adenylate kinase (223 aa).

Gly10 to Thr15 serves as a coordination point for ATP. Positions Glu30–Val59 are NMP. AMP contacts are provided by residues Ser31, Arg36, Asp57–Val59, Gly84–Arg87, and Gln91. The tract at residues Gly125–Asp164 is LID. Residue Arg126 coordinates ATP. Residues Arg161 and Arg173 each coordinate AMP. Gly209 provides a ligand contact to ATP.

Belongs to the adenylate kinase family. Monomer.

The protein resides in the cytoplasm. It catalyses the reaction AMP + ATP = 2 ADP. The protein operates within purine metabolism; AMP biosynthesis via salvage pathway; AMP from ADP: step 1/1. Its function is as follows. Catalyzes the reversible transfer of the terminal phosphate group between ATP and AMP. Plays an important role in cellular energy homeostasis and in adenine nucleotide metabolism. The polypeptide is Adenylate kinase (Nitratidesulfovibrio vulgaris (strain DSM 19637 / Miyazaki F) (Desulfovibrio vulgaris)).